The chain runs to 274 residues: Penicillin-insensitive murein endopeptidase (274 aa).

A signal peptide spans 1–19 (MKKTAIALLAWFVSSASLA). 3 disulfide bridges follow: C44–C265, C187–C235, and C216–C223. H110, H113, D120, D147, H150, and H211 together coordinate Zn(2+). The interval 225–274 (DQPLPPPGDGCGAELQSWFEPPKPGTTKPEKKTPPPLPPSCQALLDEHVL) is disordered.

It belongs to the peptidase M74 family. In terms of assembly, dimer. The cofactor is Zn(2+).

It is found in the periplasm. Murein endopeptidase that cleaves the D-alanyl-meso-2,6-diamino-pimelyl amide bond that connects peptidoglycan strands. Likely plays a role in the removal of murein from the sacculus. The polypeptide is Penicillin-insensitive murein endopeptidase (Salmonella heidelberg (strain SL476)).